Consider the following 47-residue polypeptide: Capistruin (47 aa).

Positions 1 to 28 (MVRLLAKLLRSTIHGSNGVSLDAVSSTH) are excised as a propeptide. Positions 29–37 (GTPGFQTPD) form a cross-link, isoaspartyl glycine isopeptide (Gly-Asp).

In terms of processing, it is assumed that the two processing enzymes CapB/CapC convert the precursor protein CapA into the mature lasso peptide capistruin. CapB is assumed to cleave the precursor protein CapA and to set an N-terminal Gly free, whose a-NH2 group acts as the nucleophile in the subsequent cyclization reaction. CapC is most likely involved in the side-chain carboxyl group activation of aspartic acid at position 9 generating the electrophile for the condensation reaction. CapD may export capistruin outside of the producing cells.

It is found in the secreted. In terms of biological role, peptide antibiotic that functions through inhibition of the bacterial DNA-dependent RNA polymerase (RNAP). Inhibits transcription by binding in RNAP secondary channel, where it sterically blocks the folding of the trigger loop, which is essential for efficient catalysis. In contrast to MccJ25, does not restrict access of nucleotide substrates to the catalytic center and shows a non-competitive mode of inhibition. Shows activity against closely related Gram-negative Burkholderia and Pseudomonas strains. Is not active against Gram-positive bacteria. The polypeptide is Capistruin (Burkholderia thailandensis (strain ATCC 700388 / DSM 13276 / CCUG 48851 / CIP 106301 / E264)).